Reading from the N-terminus, the 2000-residue chain is Sodium channel protein type 3 subunit alpha (2000 aa).

Topologically, residues 1 to 128 are cytoplasmic; sequence MAQALLVPPG…KIAIKILVHS (128 aa). The segment at 28-60 is disordered; the sequence is RAAEEKAKKPKKEQDNDDENKPKPNSDLEAGKN. Residues 46-57 are compositionally biased toward basic and acidic residues; the sequence is ENKPKPNSDLEA. One copy of the I repeat lies at 110–455; the sequence is ILTPLNPVRK…QQMLEQLKKQ (346 aa). Residues 129-146 form a helical membrane-spanning segment; that stretch reads LFSMLIMCTILTNCVFMT. The Extracellular segment spans residues 147-152; it reads LSNPPD. The helical transmembrane segment at 153–174 threads the bilayer; sequence WTKNVEYTFTGIYTFESLIKIL. Over 175–188 the chain is Cytoplasmic; sequence ARGFCLEDFTFLRD. Residues 189 to 206 form a helical membrane-spanning segment; it reads PWNWLDFSVIVMAYVTEF. The Extracellular portion of the chain corresponds to 207–213; the sequence is VSLGNVS. Asn211 carries an N-linked (GlcNAc...) asparagine glycan. The helical transmembrane segment at 214-235 threads the bilayer; it reads ALRTFRVLRALKTISVIPGLKT. Residues 236-249 lie on the Cytoplasmic side of the membrane; the sequence is IVGALIQSVKKLSD. The helical transmembrane segment at 250 to 269 threads the bilayer; sequence VMILTVFCLSVFALIGLQLF. At 270 to 369 the chain is on the extracellular side; it reads MGNLRNKCLQ…NYGYTSFDTF (100 aa). N-linked (GlcNAc...) asparagine glycosylation is found at Asn290, Asn296, Asn302, Asn307, and Asn339. An intramembrane region (pore-forming) is located at residues 370-386; the sequence is SWAFLSLFRLMTQDYWE. The Extracellular segment spans residues 387–397; sequence NLYQLTLRAAG. A helical transmembrane segment spans residues 398–424; that stretch reads KTYMIFFVLVIFLGSFYLVNLILAVVA. Over 425-761 the chain is Cytoplasmic; that stretch reads MAYEEQNQAT…LVNLIVMDPF (337 aa). Phosphoserine is present on residues Ser484, Ser485, and Ser486. 3 disordered regions span residues 493–528, 587–631, and 662–681; these read SKSAKEWRNRRKKRRQREHLEGNNKGERDSFPKSES, VGSE…ASMS, and ALTSPTGQLPPEGTTTETEV. Positions 500 to 509 are enriched in basic residues; the sequence is RNRRKKRRQR. 2 stretches are compositionally biased toward basic and acidic residues: residues 510–528 and 596–610; these read EHLEGNNKGERDSFPKSES and DEHSTFEDSESRRDS. Residues 662 to 678 are compositionally biased toward polar residues; it reads ALTSPTGQLPPEGTTTE. An II repeat occupies 742-1014; that stretch reads CCDAWLKVKH…QIAVGRMQKG (273 aa). A helical transmembrane segment spans residues 762 to 779; it reads VDLAITICIVLNTLFMAM. Residues 780-787 lie on the Extracellular side of the membrane; it reads EHYPMTEQ. Residues 788–812 traverse the membrane as a helical segment; it reads FSSVLTVGNLVFTGIFTAEMVLKII. The Cytoplasmic portion of the chain corresponds to 813–822; sequence AMDPYYYFQE. A helical membrane pass occupies residues 823–842; that stretch reads GWNIFDGIIVSLSLMELGLS. Over 843–846 the chain is Extracellular; sequence NVEG. Residues 847-865 form a helical membrane-spanning segment; that stretch reads LSVLRSFRLLRVFKLAKSW. The Cytoplasmic segment spans residues 866-883; that stretch reads PTLNMLIKIIGNSVGALG. The helical transmembrane segment at 884-904 threads the bilayer; it reads NLTLVLAIIVFIFAVVGMQLF. Over 905–929 the chain is Extracellular; sequence GKSYKECVCKINDDCTLPRWHMNDF. Cysteines 913 and 919 form a disulfide. The segment at residues 930–945 is an intramembrane region (pore-forming); it reads FHSFLIVFRVLCGEWI. Over 946 to 956 the chain is Extracellular; sequence ETMWDCMEVAG. Cys951 and Cys960 are joined by a disulfide. The chain crosses the membrane as a helical span at residues 957–983; that stretch reads QTMCLIVFMLVMVIGNLVVLNLFLALL. The Cytoplasmic segment spans residues 984–1205; that stretch reads LSSFSSDNLA…RKTCYSIVEH (222 aa). The tract at residues 1118-1162 is disordered; that stretch reads EEFSSESELEESKEKLNATSSSEGSTVDVVLPREGEQAETEPEED. An III repeat occupies 1188–1499; the sequence is KGKIWWNLRK…KKYYNAMKKL (312 aa). The chain crosses the membrane as a helical span at residues 1206-1226; it reads NWFETFIVFMILLSSGALAFE. Residues 1227 to 1238 are Extracellular-facing; it reads DIYIEQRKTIKT. The helical transmembrane segment at 1239 to 1260 threads the bilayer; it reads MLEYADKVFTYIFILEMLLKWV. Topologically, residues 1261–1266 are cytoplasmic; it reads AYGFQT. The chain crosses the membrane as a helical span at residues 1267–1292; sequence YFTNAWCWLDFLIVDVSLVSLVANAL. Topologically, residues 1293-1301 are extracellular; that stretch reads GYSELGAIK. Residues 1302–1320 traverse the membrane as a helical segment; it reads SLRTLRALRPLRALSRFEG. Topologically, residues 1321-1333 are cytoplasmic; that stretch reads MRVVVNALVGAIP. The chain crosses the membrane as a helical span at residues 1334–1356; the sequence is SIMNVLLVCLIFWLIFSIMGVNL. Topologically, residues 1357-1402 are extracellular; sequence FAGKFYHCVNMTTGNMFDISDVNNLSDCQALGKQARWKNVKVNFDN. Residues Cys1364 and Cys1384 are joined by a disulfide bond. 2 N-linked (GlcNAc...) asparagine glycosylation sites follow: Asn1366 and Asn1380. An intramembrane region (pore-forming) is located at residues 1403–1419; sequence VGAGYLALLQVATFKGW. Topologically, residues 1420–1442 are extracellular; it reads MDIMYAAVDSRDVKLQPVYEENL. The chain crosses the membrane as a helical span at residues 1443–1468; the sequence is YMYLYFVIFIIFGSFFTLNLFIGVII. Topologically, residues 1469 to 1526 are cytoplasmic; it reads DNFNQQKKKFGGQDIFMTEEQKKYYNAMKKLGSKKPQKPIPRPANKFQGMVFDFVTRQ. The residue at position 1501 (Ser1501) is a Phosphoserine; by PKC. The IV repeat unit spans residues 1508 to 1806; sequence IPRPANKFQG…WEKFDPDATQ (299 aa). Residues 1527 to 1545 traverse the membrane as a helical segment; it reads VFDISIMILICLNMVTMMV. Residues 1546-1553 are Extracellular-facing; the sequence is ETDDQGKY. A helical transmembrane segment spans residues 1554–1577; sequence MTLVLSRINLVFIVLFTGEFVLKL. Over 1578–1587 the chain is Cytoplasmic; that stretch reads VSLRHYYFTI. The helical transmembrane segment at 1588–1605 threads the bilayer; that stretch reads GWNIFDFVVVILSIVGMF. Topologically, residues 1606–1617 are extracellular; the sequence is LAEMIEKYFVSP. The chain crosses the membrane as a helical span at residues 1618–1640; the sequence is TLFRVIRLARIGRILRLIKGAKG. Residues 1641–1653 lie on the Cytoplasmic side of the membrane; sequence IRTLLFALMMSLP. The chain crosses the membrane as a helical span at residues 1654 to 1677; it reads ALFNIGLLLFLVMFIYAIFGMSNF. At 1678–1699 the chain is on the extracellular side; it reads AYVKKEAGIDDMFNFETFGNSM. The segment at residues 1700–1712 is an intramembrane region (pore-forming); the sequence is ICLFQITTSAGWD. Residues 1713–1744 lie on the Extracellular side of the membrane; it reads GLLAPILNSAPPDCDPDTIHPGSSVKGDCGNP. Residues 1745-1770 form a helical membrane-spanning segment; the sequence is SVGIFFFVSYIIISFLVVVNMYIAVI. The Cytoplasmic segment spans residues 1771-2000; that stretch reads LENFSVATEE…KGKEVRENQK (230 aa). The region spanning 1900 to 1929 is the IQ domain; sequence EEVSAAIIQRNFRCYLLKQRLKNISSNYNK. The disordered stretch occupies residues 1949 to 2000; sequence LNGNSTPEKTDGSSSTTSPPSYDSVTKPDKEKFEKDKPEKESKGKEVRENQK. The segment covering 1974–2000 has biased composition (basic and acidic residues); the sequence is TKPDKEKFEKDKPEKESKGKEVRENQK.

It belongs to the sodium channel (TC 1.A.1.10) family. Nav1.3/SCN3A subfamily. As to quaternary structure, heterooligomer of an alpha subunit, SCN3A, and 1 to 3 regulatory beta subunits including SCN1B and SCN2B; disulfide-linked with some beta subunits like SCN2B. Interacts with NEDD4L; could regulate expression of SCN3A at the plasma membrane through ubiquitination-regulated endocytosis. Interacts with the conotoxin GVIIJ. May be ubiquitinated by NEDD4L; which would promote its endocytosis. In terms of processing, phosphorylation at Ser-1501 by PKC in a highly conserved cytoplasmic loop slows inactivation of the sodium channel and reduces peak sodium currents. As to expression, expressed in enterochromaffin cells in both colon and small bowel (at protein level).

Its subcellular location is the cell membrane. The protein resides in the basal cell membrane. The catalysed reaction is Na(+)(in) = Na(+)(out). Pore-forming subunit of Nav1.3, a voltage-gated sodium (Nav) channel that directly mediates the depolarizing phase of action potentials in excitable membranes. Navs, also called VGSCs (voltage-gated sodium channels) or VDSCs (voltage-dependent sodium channels), operate by switching between closed and open conformations depending on the voltage difference across the membrane. In the open conformation they allow Na(+) ions to selectively pass through the pore, along their electrochemical gradient. The influx of Na+ ions provokes membrane depolarization, initiating the propagation of electrical signals throughout cells and tissues. In some secretory cell types, it also participates in cell excitability through membrane depolarization and regulates cells responsiveness to stimuli triggering secretion. For instance, it controls the release of serotonin/5-hydroxytryptamine by enterochromaffin cells and is required for both glucagon- and glucose-induced insulin secretion in pancreatic endocrine cells. This Homo sapiens (Human) protein is Sodium channel protein type 3 subunit alpha.